The primary structure comprises 174 residues: Large ribosomal subunit protein uL18 (174 aa).

This sequence belongs to the universal ribosomal protein uL18 family. Part of the 50S ribosomal subunit. Contacts the 5S and 23S rRNAs.

Functionally, this is one of the proteins that bind and probably mediate the attachment of the 5S RNA into the large ribosomal subunit, where it forms part of the central protuberance. The protein is Large ribosomal subunit protein uL18 of Methanoregula boonei (strain DSM 21154 / JCM 14090 / 6A8).